Here is a 402-residue protein sequence, read N- to C-terminus: Thyroid hormone receptor alpha (402 aa).

A disordered region spans residues 1–22 (MEQKPSTLDPLSEPEDTRWLDG). Residues 1–50 (MEQKPSTLDPLSEPEDTRWLDGKRKRKSSQCLVKSSMSGYIPSYLDKDEQ) form a modulating region. S12 carries the phosphoserine; by CK2 modification. Position 28 is a phosphoserine (S28). Residues C51, C54, C68, C71, C89, C95, C105, and C108 each coordinate Zn(2+). NR C4-type zinc fingers lie at residues 51-71 (CVVCGDKATGYHYRCITCAGC) and 89-113 (CKYDGCCVIDKITRNQCQLCRFKKC). Residues 51–125 (CVVCGDKATG…VGMAMDLVLY (75 aa)) constitute a DNA-binding region (nuclear receptor). Residues 161–402 (EEWELIHVVT…ELFPPLFLEV (242 aa)) form the NR LBD domain. Positions 226 and 275 each coordinate 3,3',5-triiodo-L-thyronine.

This sequence belongs to the nuclear hormone receptor family. NR1 subfamily. In terms of assembly, probably interacts with SFPQ.

It localises to the nucleus. In terms of biological role, nuclear hormone receptor that can act as a repressor or activator of transcription. High affinity receptor for thyroid hormones, including triiodothyronine and thyroxine. This chain is Thyroid hormone receptor alpha (THRA), found in Pygoscelis adeliae (Adelie penguin).